The sequence spans 325 residues: Melanocortin receptor 5 (325 aa).

Topologically, residues 1–37 (MNSSFHLHFLDLGLNTTDGNLSGLSVQNASSLCEDMG) are extracellular. Asparagine 2, asparagine 15, asparagine 20, and asparagine 28 each carry an N-linked (GlcNAc...) asparagine glycan. Residues 38 to 61 (IAVEVFLALGLISLLENILVIGAI) form a helical membrane-spanning segment. At 62–73 (VRNRNLHTPMYF) the chain is on the cytoplasmic side. Residues 74 to 97 (FVGSLAVADMLVSLSNSWETITIY) form a helical membrane-spanning segment. Residues 98–114 (LLTNKHLVMADASVRHL) are Extracellular-facing. Residues 115–138 (DNVFDSMICISVVASMCSLLAIAV) form a helical membrane-spanning segment. At 139 to 155 (DRYVTIFCALRYQRIMT) the chain is on the cytoplasmic side. The chain crosses the membrane as a helical span at residues 156-179 (GRRSGAIIGGIWAFCASCGTVFIV). The Extracellular portion of the chain corresponds to 180-186 (YYESTYV). Residues 187–211 (VICLIAMFLTMLLLMASLYTHMFLL) traverse the membrane as a helical segment. At 212-239 (ARTHIRRIATLPGHSSVRQRTGVKGAIT) the chain is on the cytoplasmic side. The chain crosses the membrane as a helical span at residues 240-265 (LAMLLGVFIVCWAPFFLHLILMISCP). Topologically, residues 266–273 (HNLYCSCF) are extracellular. The chain crosses the membrane as a helical span at residues 274-297 (MSHFNMYLILIMCNSVIDPLIYAF). The Cytoplasmic segment spans residues 298 to 325 (RSQEMRKTFKEIVCFQSFRTPCRFPSRY). A lipid anchor (S-palmitoyl cysteine) is attached at cysteine 311.

This sequence belongs to the G-protein coupled receptor 1 family.

The protein resides in the cell membrane. In terms of biological role, receptor for MSH (alpha, beta and gamma) and ACTH. The activity of this receptor is mediated by G proteins which activate adenylate cyclase. This receptor is a possible mediator of the immunomodulation properties of melanocortins. The protein is Melanocortin receptor 5 (MC5R) of Bos taurus (Bovine).